The chain runs to 316 residues: tRNA dimethylallyltransferase (316 aa).

13-20 (GPTAVGKT) is an ATP binding site. 15 to 20 (TAVGKT) contacts substrate. Positions 38–41 (DSIQ) are interaction with substrate tRNA.

Belongs to the IPP transferase family. In terms of assembly, monomer. The cofactor is Mg(2+).

It catalyses the reaction adenosine(37) in tRNA + dimethylallyl diphosphate = N(6)-dimethylallyladenosine(37) in tRNA + diphosphate. Functionally, catalyzes the transfer of a dimethylallyl group onto the adenine at position 37 in tRNAs that read codons beginning with uridine, leading to the formation of N6-(dimethylallyl)adenosine (i(6)A). The chain is tRNA dimethylallyltransferase from Staphylococcus carnosus (strain TM300).